A 155-amino-acid polypeptide reads, in one-letter code: Small ribosomal subunit protein uS9 (155 aa).

Belongs to the universal ribosomal protein uS9 family.

The polypeptide is Small ribosomal subunit protein uS9 (Rhizobium etli (strain CIAT 652)).